The primary structure comprises 512 residues: Cytochrome P450 monooxygenase 208 (512 aa).

A helical membrane pass occupies residues 4–24; that stretch reads LFLVLDTGAAVLLVALLFVVY. A heme-binding site is contributed by Cys-438.

It belongs to the cytochrome P450 family. It depends on heme as a cofactor.

Its subcellular location is the membrane. It participates in secondary metabolite biosynthesis. In terms of biological role, cytochrome P450 monooxygenase that is able to use 7-ethoxycoumarin as a substrate for oxidation. The protein is Cytochrome P450 monooxygenase 208 of Postia placenta (strain ATCC 44394 / Madison 698-R) (Brown rot fungus).